The chain runs to 336 residues: DNA repair protein RAD51 homolog B (336 aa).

The HhH domain maps to 45–74 (TVEAVAYAPKKELLNIKGISEAKAEKILAE). Residue 124 to 131 (GEFRTGKT) participates in ATP binding. The short motif at 242–257 (LARFLRMLLRLADEFG) is the Nuclear export signal element.

Belongs to the RecA family. RAD51 subfamily. In terms of assembly, forms linear homooligomers, giving rise to a RAD51 nucleoprotein filament, which is essential for strand-pairing reactions during DNA recombination.

The protein resides in the nucleus. Its subcellular location is the cytoplasm. It is found in the chromosome. In terms of biological role, plays an important role in homologous strand exchange, a key step in DNA repair through homologous recombination (HR). Binds to single-stranded DNA in an ATP-dependent manner to form nucleoprotein filaments which are essential for the homology search and strand exchange. Catalyzes the recognition of homology and strand exchange between homologous DNA partners to form a joint molecule between a processed DNA break and the repair template. Recruited to resolve stalled replication forks during replication stress. Also involved in interstrand cross-link repair. The sequence is that of DNA repair protein RAD51 homolog B (rad51-b) from Xenopus laevis (African clawed frog).